The chain runs to 269 residues: Zinc transporter ZupT (269 aa).

Helical transmembrane passes span 5-25, 38-58, 75-95, 125-145, 158-178, 190-210, 212-232, and 249-269; these read VLLAFGLTLFAGLATGVGSLI, SLALGFSAGVMIYVSLVEIFV, WMTIAGFFGGMLFIALIDKFI, MGIFTALAIGIHNFPEGIATF, IAIAVAIHNIPEGIAVSVPIF, LSFLSGLAEPVGALVAFLLLM, FLTDVMFGIIFAGVAGIMVFI, and LSMYGLVGGMAVMAISLVLLV. Residues asparagine 137 and glutamate 140 each coordinate Fe(2+). Zn(2+) contacts are provided by glutamate 140 and histidine 165. Fe(2+) contacts are provided by asparagine 166, glutamate 169, and glutamate 198. Glutamate 169 serves as a coordination point for Zn(2+).

It belongs to the ZIP transporter (TC 2.A.5) family. ZupT subfamily.

The protein resides in the cell membrane. The enzyme catalyses Zn(2+)(in) = Zn(2+)(out). Its function is as follows. Mediates zinc uptake. May also transport other divalent cations. The chain is Zinc transporter ZupT from Lysinibacillus sphaericus (strain C3-41).